Reading from the N-terminus, the 59-residue chain is Large ribosomal subunit protein bL33 (59 aa).

The protein belongs to the bacterial ribosomal protein bL33 family.

This Borrelia turicatae (strain 91E135) protein is Large ribosomal subunit protein bL33.